The primary structure comprises 132 residues: Transcription antitermination protein NusB (132 aa).

Belongs to the NusB family.

Functionally, involved in transcription antitermination. Required for transcription of ribosomal RNA (rRNA) genes. Binds specifically to the boxA antiterminator sequence of the ribosomal RNA (rrn) operons. The chain is Transcription antitermination protein NusB from Lachnoclostridium phytofermentans (strain ATCC 700394 / DSM 18823 / ISDg) (Clostridium phytofermentans).